A 62-amino-acid polypeptide reads, in one-letter code: Teretoxin Tan1.1 (62 aa).

The signal sequence occupies residues 1–21 (MSCFPVLFVMMLLVSQSVWAF). Positions 22-38 (PGPETRDGSVQDAESRR) are excised as a propeptide.

This sequence belongs to the teretoxin A (TA) superfamily. Post-translationally, contains 2 disulfide bonds. As to expression, expressed by the venom duct.

The protein localises to the secreted. The polypeptide is Teretoxin Tan1.1 (Terebra anilis (Auger snail)).